The primary structure comprises 1189 residues: Pumilio homolog 1 (1189 aa).

S2 carries the post-translational modification N-acetylserine. The residue at position 19 (S19) is a Phosphoserine. Positions 22–73 are disordered; that stretch reads LKHHPQEPANPNMPVVLTSGTGSQAQPQPAANQALAAGTHSSPVPGSIGVAG. The span at 45–58 shows a compositional bias: low complexity; that stretch reads QAQPQPAANQALAA. 3 positions are modified to phosphoserine: S75, S98, and S106. T112 carries the post-translational modification Phosphothreonine. Residues S124, S159, S197, S209, and S229 each carry the phosphoserine modification. Residues 233–272 form a disordered region; that stretch reads SCLRKGGFGPRDADSDENDKGEKKNKGTFDGDKLGDLKEE. Residues 250 to 272 show a composition bias toward basic and acidic residues; sequence NDKGEKKNKGTFDGDKLGDLKEE. S305 carries the phosphoserine modification. Residues 491 to 503 are compositionally biased toward low complexity; the sequence is QQSAPQAQQGQQQ. 2 disordered regions span residues 491-525 and 614-647; these read QQSA…GQQT and AGTT…SSFY. Over residues 512-525 the composition is skewed to polar residues; the sequence is RPLTPNQNQQGQQT. T515 carries the post-translational modification Phosphothreonine. Residues 627 to 647 show a composition bias toward low complexity; that stretch reads QQPQPQPQQQPSNNLASSSFY. A phosphoserine mark is found at S710 and S715. Residues 743 to 773 form a disordered region; the sequence is GPVGMPLPSQGPGHSQTPPPSLSSHGSSSSL. Residues 764-773 show a composition bias toward low complexity; it reads LSSHGSSSSL. An Omega-N-methylarginine modification is found at R797. A phosphoserine mark is found at S807 and S823. The 343-residue stretch at 829-1171 folds into the PUM-HD domain; the sequence is GRSRLLEDFR…HILAKLEKYY (343 aa). Pumilio repeat units follow at residues 849–884, 885–920, 921–958, 959–994, 995–1030, 1031–1066, 1067–1102, and 1106–1145; these read EIAG…LVFN, EILQ…ALAE, RIRG…EMVR, ELDG…FIID, AFKG…PILE, ELHQ…KIVA, EIRG…VLID, and TMND…IVMH. An adenine-nucleotide binding in RNA target region spans residues 864-868; that stretch reads SRFIQ. Residues 900–904 are uracil-nucleotide binding in RNA target; sequence NYVIQ. The adenine-nucleotide binding in RNA target stretch occupies residues 936 to 940; sequence CRVIQ. The segment at 974–978 is non-specific-nucleotide binding in RNA target; that stretch reads NHVVQ. The interval 1010–1014 is adenine-nucleotide binding in RNA target; it reads CRVIQ. Residues 1046 to 1050 form a uracil-nucleotide binding in RNA target region; sequence NYVIQ. Guanine-nucleotide binding in RNA target stretches follow at residues 1082 to 1086 and 1083 to 1086; these read SNVVE and NVVE. The segment at 1125 to 1129 is uracil-nucleotide binding in RNA target; sequence NYVVQ.

In terms of assembly, recruits the CCR4-POP2-NOT deadenylase leading to translational inhibition and mRNA degradation. Interacts with TRIM71 (via NHL repeats) in an RNA-dependent manner. Phosphorylation at Ser-715 promotes RNA-binding activity. Following growth factor stimulation phosphorylated at Ser-715, promoting binding to the 3'-UTR of CDKN1B/p27 mRNA. As to expression, widely expressed. Expressed in brain, heart, kidney, liver, lung, skin, intestine, spleen, testis and thymus. Weakly or not expressed in muscles and stomach. Expressed at various stages of myeloid and lymphoid cell development. Highly expressed in testis. Expressed in all major brain regions (at protein level).

The protein localises to the cytoplasm. Its subcellular location is the P-body. It localises to the cytoplasmic granule. In terms of biological role, sequence-specific RNA-binding protein that acts as a post-transcriptional repressor by binding the 3'-UTR of mRNA targets. Binds to an RNA consensus sequence, the Pumilio Response Element (PRE), 5'-UGUANAUA-3', that is related to the Nanos Response Element (NRE). Mediates post-transcriptional repression of transcripts via different mechanisms: acts via direct recruitment of the CCR4-POP2-NOT deadenylase leading to translational inhibition and mRNA degradation. Also mediates deadenylation-independent repression by promoting accessibility of miRNAs. Following growth factor stimulation, phosphorylated and binds to the 3'-UTR of CDKN1B/p27 mRNA, inducing a local conformational change that exposes miRNA-binding sites, promoting association of miR-221 and miR-222, efficient suppression of CDKN1B/p27 expression, and rapid entry to the cell cycle. Acts as a post-transcriptional repressor of E2F3 mRNAs by binding to its 3'-UTR and facilitating miRNA regulation. Represses a program of genes necessary to maintain genomic stability such as key mitotic, DNA repair and DNA replication factors. Its ability to repress those target mRNAs is regulated by the lncRNA NORAD (non-coding RNA activated by DNA damage) which, due to its high abundance and multitude of PUMILIO binding sites, is able to sequester a significant fraction of PUM1 and PUM2 in the cytoplasm. Involved in neuronal functions by regulating ATXN1 mRNA levels: acts by binding to the 3'-UTR of ATXN1 transcripts, leading to their down-regulation independently of the miRNA machinery. In testis, acts as a post-transcriptional regulator of spermatogenesis by binding to the 3'-UTR of mRNAs coding for regulators of p53/TP53. Involved in embryonic stem cell renewal by facilitating the exit from the ground state: acts by targeting mRNAs coding for naive pluripotency transcription factors and accelerates their down-regulation at the onset of differentiation. Binds specifically to miRNA MIR199A precursor, with PUM2, regulates miRNA MIR199A expression at a postranscriptional level. In Mus musculus (Mouse), this protein is Pumilio homolog 1.